The sequence spans 562 residues: Arginine--tRNA ligase 2 (562 aa).

The 'HIGH' region motif lies at 122–132; the sequence is PNIAKPFSMGH.

The protein belongs to the class-I aminoacyl-tRNA synthetase family. Monomer.

The protein resides in the cytoplasm. The enzyme catalyses tRNA(Arg) + L-arginine + ATP = L-arginyl-tRNA(Arg) + AMP + diphosphate. The polypeptide is Arginine--tRNA ligase 2 (argS2) (Bacillus anthracis).